The primary structure comprises 25 residues: Alpha-lytic protease (25 aa).

Belongs to the peptidase S1 family.

The catalysed reaction is Preferential cleavage: Ala-|-Xaa, Val-|-Xaa in bacterial cell walls, elastin and other proteins.. The protein is Alpha-lytic protease of Achromobacter lyticus.